A 363-amino-acid chain; its full sequence is MKESVIRKLEGLLERNEEVMALLGDASVISDQDRFRALSKEYAQLEDVVAGFKAYQQAQADLDSAKEMLEEDDAEMREMAQEEMKAAKAKLEHLEDELQILLLPKDPDDDKNAFVEIRAGAGGDEAAIFAGDLFRMYSRYAEANRWQIEIMSCNEGEHGGFKEVIMKVSGEGVYGKLKFESGGHRVQRVPETESQGRVHTSAVTVVVLHEVPEAEAISINPADLKVDTFRSSGAGGQHVNKTDSAIRITHIPTGIVVECQDQRSQHKNRAQAMSVLAARIQAVEDEKRRSAEESTRRSLVASGDRSERVRTYNFPQGRVSEHRINLTLYRLNEVMEGDLDAILLPLMQEHQADQLAALADEQG.

Q237 carries the post-translational modification N5-methylglutamine. A compositionally biased stretch (basic and acidic residues) spans 284–296; that stretch reads EDEKRRSAEESTR. The tract at residues 284–305 is disordered; it reads EDEKRRSAEESTRRSLVASGDR.

This sequence belongs to the prokaryotic/mitochondrial release factor family. In terms of processing, methylated by PrmC. Methylation increases the termination efficiency of RF1.

Its subcellular location is the cytoplasm. Peptide chain release factor 1 directs the termination of translation in response to the peptide chain termination codons UAG and UAA. The polypeptide is Peptide chain release factor 1 (Shewanella baltica (strain OS185)).